The following is a 459-amino-acid chain: Neuronal acetylcholine receptor subunit beta-2 (459 aa).

The Extracellular segment spans residues 1–203; the sequence is LRSDFLLGPE…ITYDFVIKRK (203 aa). N-linked (GlcNAc...) asparagine glycosylation is found at Asn21 and Asn138. An intrachain disulfide couples Cys125 to Cys139. The chain crosses the membrane as a helical span at residues 204 to 228; that stretch reads PLFYTINLIIPCVLITSLAILVFYL. At 229–235 the chain is on the cytoplasmic side; it reads PSDCGEK. Residues 236 to 254 traverse the membrane as a helical segment; that stretch reads VTLCMSVLLALTVFLLLIS. Topologically, residues 255–269 are extracellular; the sequence is KIVPPTSLAVPLIGK. A helical membrane pass occupies residues 270–291; sequence YLMFTMVLVTFSIVTSVCVLNV. Over 292-421 the chain is Cytoplasmic; it reads HHRSPSTHYM…WKYVAMVIDR (130 aa). Residues 422–440 traverse the membrane as a helical segment; it reads LFLWIFILVCVVGTLGLFV.

This sequence belongs to the ligand-gated ion channel (TC 1.A.9) family. Acetylcholine receptor (TC 1.A.9.1) subfamily. Beta-2/CHRNB2 sub-subfamily. In terms of assembly, neuronal AChR is a heteropentamer composed of two different types of subunits: alpha and beta. CHRNB2/Beta-2 subunit can be combined to CHRNA2/alpha-2, CHRNA3/alpha-3 or CHRNA4/alpha-4, CHRNA5/alpha-5, CHRNA6/alpha-6 and CHRNB3/beta-3 to give rise to functional receptors.

The protein localises to the synaptic cell membrane. Its subcellular location is the cell membrane. The enzyme catalyses Ca(2+)(in) = Ca(2+)(out). The catalysed reaction is K(+)(in) = K(+)(out). It carries out the reaction Na(+)(in) = Na(+)(out). Activated by a myriad of ligands such as acetylcholine, cytisine, nicotine, choline and epibatidine. nAChR activity is inhibited by the antagonist alpha-conotoxins BuIA, PnIA, PnIC, GID and MII, small disulfide-constrained peptides from cone snails. Functionally, component of neuronal acetylcholine receptors (nAChRs) that function as pentameric, ligand-gated cation channels with high calcium permeability among other activities. nAChRs are excitatory neurotrasnmitter receptors formed by a collection of nAChR subunits known to mediate synaptic transmission in the nervous system and the neuromuscular junction. Each nAchR subunit confers differential attributes to channel properties, including activation, deactivation and desensitization kinetics, pH sensitivity, cation permeability, and binding to allosteric modulators. CHRNB2 forms heteropentameric neuronal acetylcholine receptors with CHRNA2, CHRNA3, CHRNA4 and CHRNA6, as well as CHRNA5 and CHRNB3 as accesory subunits. This is Neuronal acetylcholine receptor subunit beta-2 (chrnb2) from Carassius auratus (Goldfish).